Here is a 288-residue protein sequence, read N- to C-terminus: Putative sugar uptake protein gbs2116 (288 aa).

Helical transmembrane passes span 4–26, 33–50, 55–72, 85–107, 117–134, 154–171, 181–200, 207–229, 234–256, and 268–285; these read LLIA…KIGG, FGMT…WLFK, TASL…WSVG, VSVA…GALV, FILG…FYFS, FATI…AVLF, AVIL…FMKF, VVVK…LLAA, LAIA…ILFL, and VVMG…LGIV.

The protein belongs to the GRP transporter (TC 2.A.7.5) family.

It localises to the cell membrane. This Streptococcus agalactiae serotype III (strain NEM316) protein is Putative sugar uptake protein gbs2116.